Here is a 490-residue protein sequence, read N- to C-terminus: Glutamyl-tRNA(Gln) amidotransferase subunit A (490 aa).

Catalysis depends on charge relay system residues Lys80 and Ser155. The active-site Acyl-ester intermediate is the Ser179.

The protein belongs to the amidase family. GatA subfamily. As to quaternary structure, heterotrimer of A, B and C subunits.

The catalysed reaction is L-glutamyl-tRNA(Gln) + L-glutamine + ATP + H2O = L-glutaminyl-tRNA(Gln) + L-glutamate + ADP + phosphate + H(+). Its function is as follows. Allows the formation of correctly charged Gln-tRNA(Gln) through the transamidation of misacylated Glu-tRNA(Gln) in organisms which lack glutaminyl-tRNA synthetase. The reaction takes place in the presence of glutamine and ATP through an activated gamma-phospho-Glu-tRNA(Gln). The protein is Glutamyl-tRNA(Gln) amidotransferase subunit A of Brevibacillus brevis (strain 47 / JCM 6285 / NBRC 100599).